Consider the following 137-residue polypeptide: Small ribosomal subunit protein uS12 (137 aa).

Positions 1 to 57 (MPTINQLVRKPRKSKVKKSKSPALNVGYNSRKKVQTNVSSPQKRGVATRVGTMTPKK) are disordered. Residues 9–20 (RKPRKSKVKKSK) are compositionally biased toward basic residues. Position 102 is a 3-methylthioaspartic acid (Asp-102).

The protein belongs to the universal ribosomal protein uS12 family. As to quaternary structure, part of the 30S ribosomal subunit. Contacts proteins S8 and S17. May interact with IF1 in the 30S initiation complex.

Its function is as follows. With S4 and S5 plays an important role in translational accuracy. Functionally, interacts with and stabilizes bases of the 16S rRNA that are involved in tRNA selection in the A site and with the mRNA backbone. Located at the interface of the 30S and 50S subunits, it traverses the body of the 30S subunit contacting proteins on the other side and probably holding the rRNA structure together. The combined cluster of proteins S8, S12 and S17 appears to hold together the shoulder and platform of the 30S subunit. This is Small ribosomal subunit protein uS12 from Streptococcus suis (strain 05ZYH33).